A 425-amino-acid chain; its full sequence is Glutamyl-tRNA reductase (425 aa).

Residues 49–52 (TCNR), Ser-107, 112–114 (EPQ), and Gln-118 contribute to the substrate site. The active-site Nucleophile is Cys-50. Position 187–192 (187–192 (GAGETI)) interacts with NADP(+).

The protein belongs to the glutamyl-tRNA reductase family. As to quaternary structure, homodimer.

The catalysed reaction is (S)-4-amino-5-oxopentanoate + tRNA(Glu) + NADP(+) = L-glutamyl-tRNA(Glu) + NADPH + H(+). Its pathway is porphyrin-containing compound metabolism; protoporphyrin-IX biosynthesis; 5-aminolevulinate from L-glutamyl-tRNA(Glu): step 1/2. In terms of biological role, catalyzes the NADPH-dependent reduction of glutamyl-tRNA(Glu) to glutamate 1-semialdehyde (GSA). The sequence is that of Glutamyl-tRNA reductase from Pseudomonas putida (strain W619).